A 313-amino-acid chain; its full sequence is Protein FixB (313 aa).

255 to 283 is a binding site for FAD; that stretch reads LYLAVGISGQIQHMVGANASQTIFAINKD.

Belongs to the ETF alpha-subunit/FixB family. Heterodimer of FixA and FixB.

Its pathway is amine and polyamine metabolism; carnitine metabolism. Required for anaerobic carnitine reduction. May bring reductant to CaiA. The sequence is that of Protein FixB from Escherichia coli O139:H28 (strain E24377A / ETEC).